We begin with the raw amino-acid sequence, 333 residues long: Adenosine deaminase (333 aa).

Residues histidine 12 and histidine 14 each contribute to the Zn(2+) site. Substrate-binding residues include histidine 14, aspartate 16, and glycine 170. Histidine 197 contributes to the Zn(2+) binding site. The active-site Proton donor is the glutamate 200. Residue aspartate 278 participates in Zn(2+) binding. Residue aspartate 279 coordinates substrate.

This sequence belongs to the metallo-dependent hydrolases superfamily. Adenosine and AMP deaminases family. Adenosine deaminase subfamily. The cofactor is Zn(2+).

The enzyme catalyses adenosine + H2O + H(+) = inosine + NH4(+). It catalyses the reaction 2'-deoxyadenosine + H2O + H(+) = 2'-deoxyinosine + NH4(+). In terms of biological role, catalyzes the hydrolytic deamination of adenosine and 2-deoxyadenosine. This Aliivibrio fischeri (strain ATCC 700601 / ES114) (Vibrio fischeri) protein is Adenosine deaminase.